The primary structure comprises 587 residues: Sorting nexin 2A (587 aa).

Disordered stretches follow at residues 1 to 78 and 115 to 151; these read MMGS…DSDP and SPFDENSDSEINGTEDNSLHSQFSDSLSRSPSSSSSD. Composition is skewed to polar residues over residues 42 to 59 and 123 to 134; these read NGDTSNSGYRSAMSTLSN and SEINGTEDNSLH. The span at 135–150 shows a compositional bias: low complexity; sequence SQFSDSLSRSPSSSSS. The residue at position 144 (Ser-144) is a Phosphoserine. In terms of domain architecture, PX spans 157 to 277; sequence VSNPQKEQEI…KVFLQVQGKL (121 aa). A 1,2-diacyl-sn-glycero-3-phospho-(1D-myo-inositol-3-phosphate) is bound by residues Arg-201, Lys-227, and Arg-244. Residues 331 to 586 enclose the BAR domain; the sequence is LRQSVSNDWG…TSQYDREKQS (256 aa).

This sequence belongs to the sorting nexin family. Homodimer. Heterodimer with SNX1 or SNX2A. Component of the retromer complex which consists of VPS29 (MAG1), VPS26 (VPS26A or VPS26B), VPS35 (VPS35A or VPS35B or VPS35C), VPS5/17 (SNX1 or SNX2A or SNX2B). As to expression, ubiquitously expressed but at a lower level in flowers, siliques, and senescing leaves.

It localises to the cytoplasm. It is found in the endosome membrane. The protein resides in the prevacuolar compartment membrane. The protein localises to the golgi apparatus. Its subcellular location is the trans-Golgi network membrane. In terms of biological role, plays a role in vesicular protein sorting. Acts at the crossroads between the secretory and endocytic pathways. Is involved in the endosome to vacuole protein transport and, as component of the membrane-associated retromer complex, is also involved in endosome-to-Golgi retrograde transport. Also involved in the efficient sorting of seed storage protein globulin 12S. This Arabidopsis thaliana (Mouse-ear cress) protein is Sorting nexin 2A (SNX2A).